Reading from the N-terminus, the 249-residue chain is tRNA pseudouridine synthase A (249 aa).

Asp-53 serves as the catalytic Nucleophile. Residue Tyr-111 participates in substrate binding.

This sequence belongs to the tRNA pseudouridine synthase TruA family. As to quaternary structure, homodimer.

It catalyses the reaction uridine(38/39/40) in tRNA = pseudouridine(38/39/40) in tRNA. In terms of biological role, formation of pseudouridine at positions 38, 39 and 40 in the anticodon stem and loop of transfer RNAs. The polypeptide is tRNA pseudouridine synthase A (Streptococcus suis (strain 05ZYH33)).